Reading from the N-terminus, the 78-residue chain is Acyl carrier protein (78 aa).

Positions 2–77 (SDIAERVKKI…DAIKYIGENM (76 aa)) constitute a Carrier domain. The residue at position 37 (S37) is an O-(pantetheine 4'-phosphoryl)serine.

This sequence belongs to the acyl carrier protein (ACP) family. 4'-phosphopantetheine is transferred from CoA to a specific serine of apo-ACP by AcpS. This modification is essential for activity because fatty acids are bound in thioester linkage to the sulfhydryl of the prosthetic group.

It is found in the cytoplasm. The protein operates within lipid metabolism; fatty acid biosynthesis. Carrier of the growing fatty acid chain in fatty acid biosynthesis. This Magnetococcus marinus (strain ATCC BAA-1437 / JCM 17883 / MC-1) protein is Acyl carrier protein.